Reading from the N-terminus, the 148-residue chain is Nucleoside diphosphate kinase (148 aa).

6 residues coordinate ATP: K9, F57, R85, T91, R102, and N112. T91 is modified (phosphothreonine). Residue H115 is the Pros-phosphohistidine intermediate of the active site. A Phosphoserine modification is found at S122.

Belongs to the NDK family. In terms of assembly, homotetramer. Mg(2+) serves as cofactor.

It localises to the cytoplasm. The catalysed reaction is a 2'-deoxyribonucleoside 5'-diphosphate + ATP = a 2'-deoxyribonucleoside 5'-triphosphate + ADP. It catalyses the reaction a ribonucleoside 5'-diphosphate + ATP = a ribonucleoside 5'-triphosphate + ADP. Functionally, major role in the synthesis of nucleoside triphosphates other than ATP. The ATP gamma phosphate is transferred to the NDP beta phosphate via a ping-pong mechanism, using a phosphorylated active-site intermediate. The polypeptide is Nucleoside diphosphate kinase (Bacillus cereus (strain ATCC 14579 / DSM 31 / CCUG 7414 / JCM 2152 / NBRC 15305 / NCIMB 9373 / NCTC 2599 / NRRL B-3711)).